A 310-amino-acid polypeptide reads, in one-letter code: tRNA-cytidine(32) 2-sulfurtransferase (310 aa).

The PP-loop motif signature appears at 45-50; the sequence is SGGKDS. 3 residues coordinate [4Fe-4S] cluster: Cys120, Cys123, and Cys211.

This sequence belongs to the TtcA family. Homodimer. Mg(2+) is required as a cofactor. [4Fe-4S] cluster serves as cofactor.

Its subcellular location is the cytoplasm. The catalysed reaction is cytidine(32) in tRNA + S-sulfanyl-L-cysteinyl-[cysteine desulfurase] + AH2 + ATP = 2-thiocytidine(32) in tRNA + L-cysteinyl-[cysteine desulfurase] + A + AMP + diphosphate + H(+). Its pathway is tRNA modification. In terms of biological role, catalyzes the ATP-dependent 2-thiolation of cytidine in position 32 of tRNA, to form 2-thiocytidine (s(2)C32). The sulfur atoms are provided by the cysteine/cysteine desulfurase (IscS) system. This chain is tRNA-cytidine(32) 2-sulfurtransferase, found in Shewanella putrefaciens (strain CN-32 / ATCC BAA-453).